The primary structure comprises 450 residues: Probable ECA polymerase (450 aa).

11 helical membrane passes run 6 to 26 (FSGL…LTWF), 37 to 57 (VFFS…TSVL), 63 to 83 (VGVA…CFYA), 118 to 138 (VILM…NGFL), 155 to 175 (GVAL…VYFL), 181 to 201 (AWLF…MIVG), 207 to 227 (IIIA…ISLW), 228 to 248 (MLAA…LKRY), 341 to 361 (LVVM…GLII), 378 to 398 (YKAA…IVLA), and 410 to 430 (VFFI…YWLF).

This sequence belongs to the WzyE family. In terms of assembly, probably part of a complex composed of WzxE, WzyE and WzzE.

Its subcellular location is the cell inner membrane. The protein operates within bacterial outer membrane biogenesis; enterobacterial common antigen biosynthesis. In terms of biological role, probably involved in the polymerization of enterobacterial common antigen (ECA) trisaccharide repeat units. The chain is Probable ECA polymerase from Shigella boydii serotype 18 (strain CDC 3083-94 / BS512).